The primary structure comprises 1117 residues: DNA-directed RNA polymerase subunit beta (1117 aa).

The disordered stretch occupies residues 1094 to 1117; it reads QLARRTPPRPTYESLSRESLDDDE. The segment covering 1108-1117 has biased composition (basic and acidic residues); sequence LSRESLDDDE.

This sequence belongs to the RNA polymerase beta chain family. As to quaternary structure, in cyanobacteria the RNAP catalytic core is composed of 2 alpha, 1 beta, 1 beta', 1 gamma and 1 omega subunit. When a sigma factor is associated with the core the holoenzyme is formed, which can initiate transcription.

The enzyme catalyses RNA(n) + a ribonucleoside 5'-triphosphate = RNA(n+1) + diphosphate. In terms of biological role, DNA-dependent RNA polymerase catalyzes the transcription of DNA into RNA using the four ribonucleoside triphosphates as substrates. The polypeptide is DNA-directed RNA polymerase subunit beta (Trichormus variabilis (strain ATCC 29413 / PCC 7937) (Anabaena variabilis)).